The sequence spans 376 residues: GTPase Obg (376 aa).

The Obg domain occupies 1–158; the sequence is MFIDSVNLTL…RDVRLELKLI (158 aa). Positions 159–359 constitute an OBG-type G domain; it reads ADVGLVGFPN…LKFSLLELLK (201 aa). Residues 165–172, 190–194, 212–215, 280–283, and 340–342 each bind GTP; these read GFPNVGKS, FTTLT, DIPG, TRMD, and SSA. Positions 172 and 192 each coordinate Mg(2+).

It belongs to the TRAFAC class OBG-HflX-like GTPase superfamily. OBG GTPase family. As to quaternary structure, monomer. Mg(2+) is required as a cofactor.

Its subcellular location is the cytoplasm. In terms of biological role, an essential GTPase which binds GTP, GDP and possibly (p)ppGpp with moderate affinity, with high nucleotide exchange rates and a fairly low GTP hydrolysis rate. Plays a role in control of the cell cycle, stress response, ribosome biogenesis and in those bacteria that undergo differentiation, in morphogenesis control. The chain is GTPase Obg from Campylobacter curvus (strain 525.92).